We begin with the raw amino-acid sequence, 76 residues long: Large ribosomal subunit protein uL24 (76 aa).

The protein belongs to the universal ribosomal protein uL24 family. Part of the 50S ribosomal subunit.

One of two assembly initiator proteins, it binds directly to the 5'-end of the 23S rRNA, where it nucleates assembly of the 50S subunit. Its function is as follows. One of the proteins that surrounds the polypeptide exit tunnel on the outside of the subunit. This is Large ribosomal subunit protein uL24 from Campylobacter hominis (strain ATCC BAA-381 / DSM 21671 / CCUG 45161 / LMG 19568 / NCTC 13146 / CH001A).